Consider the following 223-residue polypeptide: Ribonuclease HII (223 aa).

In terms of domain architecture, RNase H type-2 spans 32–223; that stretch reads FHIAGVDEVG…LKGRFRDNMS (192 aa). The a divalent metal cation site is built by Asp-38, Glu-39, and Asp-130.

It belongs to the RNase HII family. Mn(2+) is required as a cofactor. Requires Mg(2+) as cofactor.

It is found in the cytoplasm. The enzyme catalyses Endonucleolytic cleavage to 5'-phosphomonoester.. Its function is as follows. Endonuclease that specifically degrades the RNA of RNA-DNA hybrids. The chain is Ribonuclease HII from Bartonella quintana (strain Toulouse) (Rochalimaea quintana).